The chain runs to 223 residues: Protein UGX2 (223 aa).

Residues 78 to 95 are compositionally biased toward basic residues; that stretch reads SNKRAKMKSKTKLTRTAK. The segment at 78-117 is disordered; that stretch reads SNKRAKMKSKTKLTRTAKQRRESPVCERDESDEDNDSDHY. Residues 96–105 show a composition bias toward basic and acidic residues; it reads QRRESPVCER.

The polypeptide is Protein UGX2 (UGX2) (Saccharomyces cerevisiae (strain ATCC 204508 / S288c) (Baker's yeast)).